A 392-amino-acid chain; its full sequence is Formate-dependent phosphoribosylglycinamide formyltransferase (392 aa).

Residues 22-23 (EL) and glutamate 82 contribute to the N(1)-(5-phospho-beta-D-ribosyl)glycinamide site. ATP is bound by residues arginine 114, lysine 155, 160 to 165 (SSGKGQ), 195 to 198 (EGVV), and glutamate 203. Residues 119–308 (RLAAEELGLP…EFALHVRAFL (190 aa)) enclose the ATP-grasp domain. Glutamate 267 and glutamate 279 together coordinate Mg(2+). N(1)-(5-phospho-beta-D-ribosyl)glycinamide-binding positions include aspartate 286, lysine 355, and 362 to 363 (RR).

The protein belongs to the PurK/PurT family. In terms of assembly, homodimer.

The enzyme catalyses N(1)-(5-phospho-beta-D-ribosyl)glycinamide + formate + ATP = N(2)-formyl-N(1)-(5-phospho-beta-D-ribosyl)glycinamide + ADP + phosphate + H(+). It participates in purine metabolism; IMP biosynthesis via de novo pathway; N(2)-formyl-N(1)-(5-phospho-D-ribosyl)glycinamide from N(1)-(5-phospho-D-ribosyl)glycinamide (formate route): step 1/1. Its function is as follows. Involved in the de novo purine biosynthesis. Catalyzes the transfer of formate to 5-phospho-ribosyl-glycinamide (GAR), producing 5-phospho-ribosyl-N-formylglycinamide (FGAR). Formate is provided by PurU via hydrolysis of 10-formyl-tetrahydrofolate. The protein is Formate-dependent phosphoribosylglycinamide formyltransferase of Salmonella paratyphi B (strain ATCC BAA-1250 / SPB7).